Reading from the N-terminus, the 181-residue chain is uncharacterized protein (181 aa).

The first 19 residues, 1–19 (MRRLLACSAGVLCFSQLGA), serve as a signal peptide directing secretion.

This is an uncharacterized protein from Treponema pallidum (strain Nichols).